Here is a 540-residue protein sequence, read N- to C-terminus: Malolactic enzyme (540 aa).

Tyr-90 functions as the Proton donor in the catalytic mechanism. The active-site Proton acceptor is Lys-163. Lys-163 contributes to the substrate binding site. 3 residues coordinate Mn(2+): Glu-234, Asp-235, and Asp-258. NAD(+) is bound by residues 291 to 294, Asn-403, and Asn-448; that span reads GGSA. Asn-448 provides a ligand contact to substrate.

Belongs to the malic enzymes family. In terms of assembly, homodimer. The cofactor is Mn(2+). It depends on NAD(+) as a cofactor.

The catalysed reaction is (S)-malate + H(+) = (S)-lactate + CO2. Its function is as follows. Involved in the malolactic fermentation (MLF) of wine, which results in a natural decrease in acidity and favorable changes in wine flavors. Catalyzes the decarboxylation of L-malate to L-lactate. This is Malolactic enzyme from Lactococcus lactis subsp. lactis (strain IL1403) (Streptococcus lactis).